A 240-amino-acid chain; its full sequence is uncharacterized protein (240 aa).

2 disordered regions span residues 99–121 (EPPTVSAPPPPSQFSDEPTSPEL) and 136–167 (ATVSSPTSPRPITTESSRVSPTKEKWGRKRVH). The segment covering 137–155 (TVSSPTSPRPITTESSRVS) has biased composition (polar residues).

This is an uncharacterized protein from Ictaluridae (bullhead catfishes).